The chain runs to 213 residues: tRNA (guanine-N(7)-)-methyltransferase (213 aa).

S-adenosyl-L-methionine is bound by residues E44, E69, N96, and D118. D118 is an active-site residue. A substrate-binding site is contributed by K122. The segment at 124 to 129 is interaction with RNA; sequence RHEKRR. Residues D154 and 192–195 each bind substrate; that span reads TEYE.

It belongs to the class I-like SAM-binding methyltransferase superfamily. TrmB family.

The enzyme catalyses guanosine(46) in tRNA + S-adenosyl-L-methionine = N(7)-methylguanosine(46) in tRNA + S-adenosyl-L-homocysteine. It functions in the pathway tRNA modification; N(7)-methylguanine-tRNA biosynthesis. Its function is as follows. Catalyzes the formation of N(7)-methylguanine at position 46 (m7G46) in tRNA. The polypeptide is tRNA (guanine-N(7)-)-methyltransferase (Latilactobacillus sakei subsp. sakei (strain 23K) (Lactobacillus sakei subsp. sakei)).